We begin with the raw amino-acid sequence, 313 residues long: HPr kinase/phosphorylase (313 aa).

Catalysis depends on residues histidine 140 and lysine 161. 155–162 (GNSGAGKS) contributes to the ATP binding site. Serine 162 contacts Mg(2+). Residue aspartate 179 is the Proton acceptor; for phosphorylation activity. Proton donor; for dephosphorylation activity of the active site. An important for the catalytic mechanism of both phosphorylation and dephosphorylation region spans residues 203 to 212 (IEVRGLGILN). Glutamate 204 is a Mg(2+) binding site. Residue arginine 246 is part of the active site. The tract at residues 267–272 (PVAAGR) is important for the catalytic mechanism of dephosphorylation.

The protein belongs to the HPrK/P family. Homohexamer. Mg(2+) is required as a cofactor.

It catalyses the reaction [HPr protein]-L-serine + ATP = [HPr protein]-O-phospho-L-serine + ADP + H(+). The enzyme catalyses [HPr protein]-O-phospho-L-serine + phosphate + H(+) = [HPr protein]-L-serine + diphosphate. Functionally, catalyzes the ATP- as well as the pyrophosphate-dependent phosphorylation of a specific serine residue in HPr, a phosphocarrier protein of the phosphoenolpyruvate-dependent sugar phosphotransferase system (PTS). HprK/P also catalyzes the pyrophosphate-producing, inorganic phosphate-dependent dephosphorylation (phosphorolysis) of seryl-phosphorylated HPr (P-Ser-HPr). This Aromatoleum aromaticum (strain DSM 19018 / LMG 30748 / EbN1) (Azoarcus sp. (strain EbN1)) protein is HPr kinase/phosphorylase.